A 586-amino-acid polypeptide reads, in one-letter code: MAEGVPASPSSGEGSRGPHSGVIQWLVDNFCICEECSVPRCLMYEIYVETCGQNTENQVNPATFGKLVRLVFPDLGTRRLGTRGSARYHYDGICIKKSSFFYAQYCYLIGEKRYHSGDAIAFEKSTNYNSIIQQEATCEDHSPMKTDPVGSPLSEFRRCPFLEQEQAKKYSCNMMAFLADEYCNYCRDILRNVEDLLTSFWKSLQQDTVMLMSLPDVCQLFKCYDVQLYKGIEDVLLHDFLEDVSIQYLKSVQLFSKKFKLWLLNALEGVPALLQISKLKEVTLFVKRLRRKTYLSNMAKTMRMVLKSKRRVSVLKSDLQAIINQGTLATSKKALASDRSGADELENNPEMKCLRNLISLLGTSTDLRVFLSCLSSHLQAFVFQTSRSKEEFTKLAASFQLRWNLLLTAVSKAMTLCHRDSFGSWHLFHLLLLEYMIHILQSCLEEEEEEEDMGTVKEMLPDDPTLGQPDQALFHSLNSSLSQACASPSMEPLGVMPTHMGQGRYPVGVSNMVLRILGFLVDTAMGNKLIQVLLEDETTESAVKLSLPMGQEALITLKDGQQFVIQISDVPQSSEDIYFRENNANV.

The RFX-type winged-helix DNA-binding region spans 22–97 (VIQWLVDNFC…YHYDGICIKK (76 aa)).

This sequence belongs to the RFX family.

It localises to the nucleus. May be a transcription factor. The polypeptide is DNA-binding protein RFX8 (RFX8) (Homo sapiens (Human)).